A 239-amino-acid chain; its full sequence is uncharacterized protein (239 aa).

Helical transmembrane passes span L9–I29, I65–I85, I94–V114, and I167–I187.

Its subcellular location is the cell membrane. This is an uncharacterized protein from Methanocaldococcus jannaschii (strain ATCC 43067 / DSM 2661 / JAL-1 / JCM 10045 / NBRC 100440) (Methanococcus jannaschii).